We begin with the raw amino-acid sequence, 964 residues long: Insulin receptor substrate 1 (964 aa).

Residues 8–109 (GMALSGNLKK…WLDKLLVLQR (102 aa)) enclose the PH domain. In terms of domain architecture, IRS-type PTB spans 122-236 (YDQVWQVVIQ…SAMSAKTESN (115 aa)). The segment at 249 to 268 (LSHEPMRKRSSSANEASKPI) is disordered. Phosphoserine is present on residues serine 286, serine 287, and serine 342. Tyrosine 410 carries the post-translational modification Phosphotyrosine; by INSR. The YXXM motif 1 signature appears at 410 to 413 (YIPM). Residues 527 to 560 (ASNRSQSSIGKEGSSYGSSANRQKKSTSAPLLSL) are disordered. The segment covering 528 to 560 (SNRSQSSIGKEGSSYGSSANRQKKSTSAPLLSL) has biased composition (polar residues). Position 554 is a phosphoserine (serine 554). The YXXM motif 2 motif lies at 640–643 (YLEM). Basic and acidic residues predominate over residues 698–712 (EKWREQPSRSEEKKS). A disordered region spans residues 698–735 (EKWREQPSRSEEKKSNSPLNDNPFSLKPTNVESKSKSH). A compositionally biased stretch (polar residues) spans 713–729 (NSPLNDNPFSLKPTNVE). Position 907 is a phosphotyrosine; by INSR (tyrosine 907). The tract at residues 921–964 (AKYLKRGSRESPPVSACPEDGNTYARIDFDQSDSSSSSSNIFNT) is disordered. Phosphoserine occurs at positions 928 and 931. Tyrosine 944 bears the Phosphotyrosine; by INSR mark. The span at 952–964 (SDSSSSSSNIFNT) shows a compositional bias: low complexity.

As to quaternary structure, bindings to phosphatidylinositol 3-kinase and SHP2.

Its function is as follows. Activates phosphatidylinositol 3-kinase when bound to the regulatory p85 subunit. May mediate the control of various cellular processes by insulin-like peptides. When phosphorylated by the insulin receptor binds specifically to various cellular proteins containing SH2 domains. Involved in control of cell proliferation, cell size, and body and organ growth throughout development. Also has a role in a signaling pathway controlling the physiological response required to endure periods of low nutrient conditions. Insulin/insulin-like growth factor (IGF) signaling pathway has a role in regulating aging and is necessary in the ovary for vitellogenic maturation. The sequence is that of Insulin receptor substrate 1 from Drosophila sechellia (Fruit fly).